The following is a 218-amino-acid chain: GCN5-related N-acetyltransferase 9 (218 aa).

The region spanning 36–183 (SALLEATGSE…KEVTLEYPVT (148 aa)) is the N-acetyltransferase domain. Residues 112 to 114 (MIA), 120 to 125 (GKGLGK), 152 to 154 (NTA), and Phe159 each bind acetyl-CoA.

It belongs to the acetyltransferase family. GNAT subfamily. Oligomer. As to expression, expressed throughout the plant.

It is found in the cytoplasm. The protein localises to the nucleus. The enzyme catalyses an N-terminal L-alpha-aminoacyl-[protein] + acetyl-CoA = N-terminal N(alpha)-acetyl-L-alpha-aminoacyl-[protein] + CoA + H(+). It carries out the reaction L-lysyl-[protein] + acetyl-CoA = N(6)-acetyl-L-lysyl-[protein] + CoA + H(+). Functionally, probable protein acetyltransferase with dual specificity triggering both N-alpha-acetylation (NTA) and epsilon-lysine acetylation (KA). The chain is GCN5-related N-acetyltransferase 9 from Arabidopsis thaliana (Mouse-ear cress).